We begin with the raw amino-acid sequence, 705 residues long: Solute carrier family 28 member 3 (705 aa).

The span at 1-21 shows a compositional bias: basic and acidic residues; it reads MSRSDPDPGKNSEPSKSKMSL. The tract at residues 1–96 is disordered; sequence MSRSDPDPGK…TEEESEDERQ (96 aa). The Cytoplasmic portion of the chain corresponds to 1-119; the sequence is MSRSDPDPGK…FCRKHRVILQ (119 aa). Positions 48–63 are enriched in polar residues; the sequence is APGNSTVRSRVVQSGE. Over residues 65-74 the composition is skewed to basic and acidic residues; it reads GRAKQDDRQI. A helical membrane pass occupies residues 120–140; that stretch reads HTIWAVLLTGFLALVIAACAL. Residues 141 to 145 are Extracellular-facing; sequence NFHRA. A helical transmembrane segment spans residues 146–166; it reads LPLFVITLVTIFFVVWDRLMA. Residues 167-190 are Cytoplasmic-facing; that stretch reads KYEQRIDDVLSPGKRLLERHWFWL. The helical transmembrane segment at 191–211 threads the bilayer; sequence KWVVWCSLILAVILWLALDTA. The Extracellular segment spans residues 212–214; it reads RLG. Residues 215–236 form a helical membrane-spanning segment; the sequence is QQQLISFGGLVMYIVLLFLFSK. Residues 237–244 lie on the Cytoplasmic side of the membrane; it reads HPTRVYWR. A helical membrane pass occupies residues 245-264; it reads PVFWGIGLQFLLGLLILRTR. Over 265–301 the chain is Extracellular; the sequence is PGFVAFDWMGKQVQTFLGYTDAGAQFVFGEKYTDHFF. The chain crosses the membrane as a helical span at residues 302–322; sequence AFKILPIVVFFSTVMSMLYYL. Topologically, residues 323–346 are cytoplasmic; that stretch reads GLMQWIIRKVGWLMLVTMGSSPIE. An intramembrane region (helical) is located at residues 347–365; it reads SVVAAGNIFVGQTESPLLV. Residues 366–378 are Cytoplasmic-facing; sequence QPYLPHVTKSELH. The chain crosses the membrane as a helical span at residues 379–401; sequence TIMTAGFATIAGSVLGAYISFGV. The Extracellular segment spans residues 402-403; that stretch reads SS. Residues 404–425 traverse the membrane as a helical segment; that stretch reads THLLTASVMSAPAALAVAKLFW. Residues 426–460 lie on the Cytoplasmic side of the membrane; the sequence is PETEKPKITLKNAMKMENGDSRNLLEAATQGASSS. A helical transmembrane segment spans residues 461–486; sequence IPLVANIAANLIAFLALLSFVNSALS. The Extracellular segment spans residues 487–524; that stretch reads WFGSMFDYPQLSFELICSYIFMPFSFMMGVDWQDRFMV. The helical intramembrane region spans 525-544; that stretch reads AKLIGYKTFFNEFVAYEHLS. Residues 545-583 lie on the Extracellular side of the membrane; that stretch reads KFINLRKAAGPKFVNGVQQYMSIRSETIATYALCGFANF. Residues 584–594 traverse the membrane as a helical segment; it reads GSLGIVIGGLT. The Cytoplasmic portion of the chain corresponds to 595–607; sequence SIAPSRKRDIASG. The helical transmembrane segment at 608-630 threads the bilayer; the sequence is AMRALIAGTIACFMTACIAGMLS. The Extracellular segment spans residues 631-705; sequence DTPVAINCHH…LNCGWIPNIP (75 aa).

Belongs to the concentrative nucleoside transporter (CNT) (TC 2.A.41) family. In terms of assembly, homotrimer. As to expression, expressed in kidney; in the proximal tubule, glomerulus and cortical collecting duct.

The protein localises to the cell membrane. The enzyme catalyses thymidine(out) + 2 Na(+)(out) = thymidine(in) + 2 Na(+)(in). It catalyses the reaction cytidine(out) + 2 Na(+)(out) = cytidine(in) + 2 Na(+)(in). It carries out the reaction uridine(out) + 2 Na(+)(out) = uridine(in) + 2 Na(+)(in). The catalysed reaction is adenosine(out) + 2 Na(+)(out) = adenosine(in) + 2 Na(+)(in). The enzyme catalyses guanosine(out) + 2 Na(+)(out) = guanosine(in) + 2 Na(+)(in). It catalyses the reaction inosine(out) + 2 Na(+)(out) = inosine(in) + 2 Na(+)(in). Sodium-dependent, pyrimidine- and purine-selective. Involved in the homeostasis of endogenous nucleosides. Exhibits the transport characteristics of the nucleoside transport system cib or N3 subtype (N3/cib) (with marked transport of both thymidine and inosine). Employs a 2:1 sodium/nucleoside ratio. Also able to transport gemcitabine, 3'-azido-3'-deoxythymidine (AZT), ribavirin and 3-deazauridine. The polypeptide is Solute carrier family 28 member 3 (Slc28a3) (Rattus norvegicus (Rat)).